The sequence spans 648 residues: Acetyl-coenzyme A synthetase (648 aa).

Residues 191–194, T310, and N334 each bind CoA; that span reads RGGR. ATP-binding positions include 386 to 388, 410 to 415, D499, and R514; these read GEP and DTWWQT. S522 contacts CoA. Residue R525 participates in ATP binding. Mg(2+) contacts are provided by V536, H538, and I541. R583 contributes to the CoA binding site. K608 is modified (N6-acetyllysine).

This sequence belongs to the ATP-dependent AMP-binding enzyme family. The cofactor is Mg(2+). Acetylated. Deacetylation by the SIR2-homolog deacetylase activates the enzyme.

The catalysed reaction is acetate + ATP + CoA = acetyl-CoA + AMP + diphosphate. Its function is as follows. Catalyzes the conversion of acetate into acetyl-CoA (AcCoA), an essential intermediate at the junction of anabolic and catabolic pathways. AcsA undergoes a two-step reaction. In the first half reaction, AcsA combines acetate with ATP to form acetyl-adenylate (AcAMP) intermediate. In the second half reaction, it can then transfer the acetyl group from AcAMP to the sulfhydryl group of CoA, forming the product AcCoA. In Aeromonas hydrophila subsp. hydrophila (strain ATCC 7966 / DSM 30187 / BCRC 13018 / CCUG 14551 / JCM 1027 / KCTC 2358 / NCIMB 9240 / NCTC 8049), this protein is Acetyl-coenzyme A synthetase.